The sequence spans 263 residues: Acyl-[acyl-carrier-protein]--UDP-N-acetylglucosamine O-acyltransferase (263 aa).

The protein belongs to the transferase hexapeptide repeat family. LpxA subfamily. Homotrimer.

The protein localises to the cytoplasm. The catalysed reaction is a (3R)-hydroxyacyl-[ACP] + UDP-N-acetyl-alpha-D-glucosamine = a UDP-3-O-[(3R)-3-hydroxyacyl]-N-acetyl-alpha-D-glucosamine + holo-[ACP]. It participates in glycolipid biosynthesis; lipid IV(A) biosynthesis; lipid IV(A) from (3R)-3-hydroxytetradecanoyl-[acyl-carrier-protein] and UDP-N-acetyl-alpha-D-glucosamine: step 1/6. Functionally, involved in the biosynthesis of lipid A, a phosphorylated glycolipid that anchors the lipopolysaccharide to the outer membrane of the cell. The polypeptide is Acyl-[acyl-carrier-protein]--UDP-N-acetylglucosamine O-acyltransferase (Campylobacter jejuni subsp. jejuni serotype O:6 (strain 81116 / NCTC 11828)).